A 295-amino-acid chain; its full sequence is Sulfotransferase 1 family member D1 (295 aa).

48–53 contributes to the 3'-phosphoadenylyl sulfate binding site; sequence KSGTTW. Substrate is bound by residues Phe81 and 106-108; that span reads KTH. The active-site Proton acceptor is His108. Arg130 and Ser138 together coordinate 3'-phosphoadenylyl sulfate. Position 142 (Phe142) interacts with substrate. 3'-phosphoadenylyl sulfate contacts are provided by residues Tyr193, Ser227, and 257 to 259; that span reads RKG.

Belongs to the sulfotransferase 1 family.

It localises to the cytoplasm. Its function is as follows. Sulfotransferase with broad substrate specificity that utilizes 3'-phospho-5'-adenylyl sulfate (PAPS) as sulfonate donor to catalyze the sulfate conjugation of catecholamines, such as dopamine, prostaglandins, leukotriene E4, drugs and xenobiotic compounds. Has sulfotransferase activity towards p-nitrophenol, 2-naphthylamine and minoxidil (in vitro). Sulfonation increases the water solubility of most compounds, and therefore their renal excretion, but it can also result in bioactivation to form active metabolites. This is Sulfotransferase 1 family member D1 (Sult1d1) from Rattus norvegicus (Rat).